The sequence spans 190 residues: Heme-binding protein 1 (190 aa).

This sequence belongs to the HEBP family. In terms of assembly, monomer.

Its subcellular location is the cytoplasm. In terms of biological role, may bind free porphyrinogens that may be present in the cell and thus facilitate removal of these potentially toxic compound. Binds with a high affinity to one molecule of heme or porphyrins. It binds metalloporphyrins, free porphyrins and N-methylprotoporphyrin with similar affinities. This chain is Heme-binding protein 1 (hebp1), found in Xenopus tropicalis (Western clawed frog).